A 334-amino-acid chain; its full sequence is Glycerol-3-phosphate dehydrogenase [NAD(P)+] (334 aa).

W13, R33, and K106 together coordinate NADPH. The sn-glycerol 3-phosphate site is built by K106, G137, and S139. A141 contacts NADPH. Sn-glycerol 3-phosphate contacts are provided by K192, D245, S255, R256, and N257. K192 acts as the Proton acceptor in catalysis. Residue R256 participates in NADPH binding. NADPH contacts are provided by V280 and E282.

This sequence belongs to the NAD-dependent glycerol-3-phosphate dehydrogenase family.

It is found in the cytoplasm. It carries out the reaction sn-glycerol 3-phosphate + NAD(+) = dihydroxyacetone phosphate + NADH + H(+). It catalyses the reaction sn-glycerol 3-phosphate + NADP(+) = dihydroxyacetone phosphate + NADPH + H(+). Its pathway is membrane lipid metabolism; glycerophospholipid metabolism. Its function is as follows. Catalyzes the reduction of the glycolytic intermediate dihydroxyacetone phosphate (DHAP) to sn-glycerol 3-phosphate (G3P), the key precursor for phospholipid synthesis. The protein is Glycerol-3-phosphate dehydrogenase [NAD(P)+] of Chlamydia pneumoniae (Chlamydophila pneumoniae).